A 982-amino-acid chain; its full sequence is Probable DNA-directed RNA polymerase (982 aa).

This sequence belongs to the RNA polymerase beta chain family.

It carries out the reaction RNA(n) + a ribonucleoside 5'-triphosphate = RNA(n+1) + diphosphate. In terms of biological role, the presence of the two linear plasmids, termed pGKL1 and pGKL2, in strains of Kluyveromyces lactis confers the killer phenotype to the host cell, by promoting the secretion of a toxin able to inhibit the growth of sensitive strains. The protein is Probable DNA-directed RNA polymerase of Kluyveromyces lactis (strain ATCC 8585 / CBS 2359 / DSM 70799 / NBRC 1267 / NRRL Y-1140 / WM37) (Yeast).